Consider the following 472-residue polypeptide: L-fuculokinase (472 aa).

Belongs to the FGGY kinase family. It depends on a divalent metal cation as a cofactor.

The enzyme catalyses L-fuculose + ATP = L-fuculose 1-phosphate + ADP + H(+). It participates in carbohydrate degradation; L-fucose degradation; L-lactaldehyde and glycerone phosphate from L-fucose: step 2/3. Its function is as follows. Catalyzes the phosphorylation of L-fuculose. Can also phosphorylate, with lower efficiency, D-ribulose, D-xylulose and D-fructose. This Escherichia coli (strain K12) protein is L-fuculokinase.